We begin with the raw amino-acid sequence, 105 residues long: UPF0145 protein GK1405 (105 aa).

It belongs to the UPF0145 family.

In Geobacillus kaustophilus (strain HTA426), this protein is UPF0145 protein GK1405.